Reading from the N-terminus, the 219-residue chain is 3-dehydroquinate dehydratase (219 aa).

3-dehydroquinate contacts are provided by residues Ser-10, 29–31, and Arg-59; that span reads EVR. The Proton donor/acceptor role is filled by His-116. Lys-142 (schiff-base intermediate with substrate) is an active-site residue. The 3-dehydroquinate site is built by Arg-180 and Gln-203.

It belongs to the type-I 3-dehydroquinase family. As to quaternary structure, homodimer.

It carries out the reaction 3-dehydroquinate = 3-dehydroshikimate + H2O. Its pathway is metabolic intermediate biosynthesis; chorismate biosynthesis; chorismate from D-erythrose 4-phosphate and phosphoenolpyruvate: step 3/7. In terms of biological role, involved in the third step of the chorismate pathway, which leads to the biosynthesis of aromatic amino acids. Catalyzes the cis-dehydration of 3-dehydroquinate (DHQ) and introduces the first double bond of the aromatic ring to yield 3-dehydroshikimate. The chain is 3-dehydroquinate dehydratase from Methanocella arvoryzae (strain DSM 22066 / NBRC 105507 / MRE50).